Reading from the N-terminus, the 77-residue chain is U11-lycotoxin-Ls1d (77 aa).

Positions 1–20 are cleaved as a signal peptide; that stretch reads MKLIIFTGLVLFAIVSLIEA. The propeptide occupies 21-26; that stretch reads EEESGR.

The protein belongs to the neurotoxin 19 (CSTX) family. 10 (U11-Lctx) subfamily. Post-translationally, contains 4 disulfide bonds. Expressed by the venom gland.

It is found in the secreted. The sequence is that of U11-lycotoxin-Ls1d from Lycosa singoriensis (Wolf spider).